A 956-amino-acid polypeptide reads, in one-letter code: MPVSVITTVLACLWLSYRLYKFLTIPVSSIVSTLKIKTPPATKVSIDKIATDSVTIHWENEPVKAEDNGSADRNFISHYLLYLNNTQLAIFPNNPNSLYTCCSITGLEAETQYQLDFITINNKGFINKLPSIYCMTKAREANEALKTRKWRRNTITSSTAMQPRNSKSEPAPLPSHYSSVSLSTFSSNITNSATSNNGSNLPAYTSLTTLKDLDSFSIDDLKKILICAQEDLHDVLSQQTSLLQDFQESKLELELELDNLKTHWSHEIDLRKSLKSNIKSLENSKLLTDLKIEKLNKKIDKSKEKISKMRNDMQKWSQEDTELLSKDTIKEKYFKLLNESNASVANINKEIESLQNEISKMEESNKRLNASKKSLITSIVVNANVENDKPIASGELSAVLKKLNDFTLEKNGFLSNAGEEFLSKLNADSSLIKMIKQELSIDQELEANWKLQRSNLLKKISALENQFNEMSLNNRNLKTKLMVQPYKNNGDSLAATNSNNSAEKNRSSGSIQLPLSNNMSRTGSIDLISNNNKSINNSNADSAPPLRLHNPVSYSPSNEPIQPSSSLLSQLTQDTDNRSMLSNHISSNNENKQQPSSYSHALPTTATANATATATATNGHSRSNLWTTAQFAQPSHQQVSTELDQAFEYDNANHLISGLQNMIYDETDYPDNISNYSKGFTTDELDNYWTKQQPQVRSTNESLFSTTGTPMSSYKANPVISPYSSSHLRQTSNATNTNPMHPQSLLAATLNDPSLQSFVRSGSFYSAPQPANSLQNNINGNETENISPRISSDFNLLVPNLSPRLSNDVPIVPGNNTTLTPSHSNILTMNHQPTADNITRRSFHASSPPFNSIWNSNTNQLSPPLEEQYHLDVPVGPKVPAKEPSPKPSHKRNQSNSSISSAWSKFKHKSASSPANADTDIQDSSTPSTSPSGRRMSKLLSKSGMNNLFNPHSHDS.

Residues 40–141 form the Fibronectin type-III domain; it reads PATKVSIDKI…IYCMTKAREA (102 aa). 2 disordered regions span residues 152–173 and 488–600; these read RNTI…PAPL and NNGD…SYSH. Polar residues-rich tracts occupy residues 153–165 and 488–523; these read NTIT…QPRN and NNGD…SRTG. Thr-154 is subject to Phosphothreonine. A phosphoserine mark is found at Ser-501 and Ser-520. The segment covering 524-543 has biased composition (low complexity); the sequence is SIDLISNNNKSINNSNADSA. Residues 552-563 show a composition bias toward polar residues; it reads VSYSPSNEPIQP. Residues 564 to 574 show a composition bias toward low complexity; the sequence is SSSLLSQLTQD. Residues 578–599 are compositionally biased toward polar residues; it reads RSMLSNHISSNNENKQQPSSYS. Residues Ser-802, Ser-842, and Ser-895 each carry the phosphoserine modification. The tract at residues 875-956 is disordered; it reads VGPKVPAKEP…NLFNPHSHDS (82 aa). Over residues 895 to 904 the composition is skewed to low complexity; the sequence is SNSSISSAWS.

This is an uncharacterized protein from Saccharomyces cerevisiae (strain ATCC 204508 / S288c) (Baker's yeast).